A 424-amino-acid chain; its full sequence is MKLEMICTGEEVLSGQILDTNAAWFANVMMDMGVETQYRVTVGDRLEDLVAVFRERSLHADVILVNGGLGPTSDDMSAQAMAMAKGEPLVENALWRHTLEEWFARYNREMPRSNLKQAMLPASAIMVDNPVGTACGFRVKLNNAWLFFTPGVPSELKHMVHEQFIPFIRSEYELDEQSSVEKLLTLGQGESAIGDILSEVLLPEGISFGYRSFMPYIEVKIFARGQKAMAQLGSITSQVKHALGAVVVAEGKTSLAAEIHARLFQSGFSLSVAESCTGGMIASQLTDFPGSSSYFQQGLVTYSNESKVKLLGVLPQTLDDHGAVSIATVEAMAIGARNILDSDFALATSGIAGPDGGTEDKPVGTVAIALATKFGTYSQMVKLPRRSRELVRNLTAAIALDMLRRALLDEAVIVDYPSVQRLAK.

It belongs to the CinA family.

This is CinA-like protein from Shewanella denitrificans (strain OS217 / ATCC BAA-1090 / DSM 15013).